Here is a 37-residue protein sequence, read N- to C-terminus: TSYGNGVHCNKSKCWIDVSELETYKAGTVSNPKDILW.

Cys9 and Cys14 form a disulfide bridge.

The protein resides in the secreted. Bacteriocin active against Listeria monocytogenes and Lactococcus cremoris. This is Bacteriocin lactococcin MMFII from Lactococcus lactis subsp. lactis (Streptococcus lactis).